The sequence spans 101 residues: NAD(P)H-quinone oxidoreductase subunit 4L, chloroplastic (101 aa).

Transmembrane regions (helical) follow at residues 2-22, 32-52, and 61-81; these read MLEH…YGLI, MCLE…SDFF, and IFSI…LAIV.

Belongs to the complex I subunit 4L family. NDH is composed of at least 16 different subunits, 5 of which are encoded in the nucleus.

The protein resides in the plastid. It is found in the chloroplast thylakoid membrane. It catalyses the reaction a plastoquinone + NADH + (n+1) H(+)(in) = a plastoquinol + NAD(+) + n H(+)(out). The enzyme catalyses a plastoquinone + NADPH + (n+1) H(+)(in) = a plastoquinol + NADP(+) + n H(+)(out). NDH shuttles electrons from NAD(P)H:plastoquinone, via FMN and iron-sulfur (Fe-S) centers, to quinones in the photosynthetic chain and possibly in a chloroplast respiratory chain. The immediate electron acceptor for the enzyme in this species is believed to be plastoquinone. Couples the redox reaction to proton translocation, and thus conserves the redox energy in a proton gradient. In Helianthus annuus (Common sunflower), this protein is NAD(P)H-quinone oxidoreductase subunit 4L, chloroplastic.